Consider the following 721-residue polypeptide: Polyribonucleotide nucleotidyltransferase (721 aa).

Positions 495 and 501 each coordinate Mg(2+). A KH domain is found at P562 to I621. An S1 motif domain is found at G631 to R699. The interval L698–S721 is disordered.

Belongs to the polyribonucleotide nucleotidyltransferase family. The cofactor is Mg(2+).

The protein resides in the cytoplasm. The enzyme catalyses RNA(n+1) + phosphate = RNA(n) + a ribonucleoside 5'-diphosphate. In terms of biological role, involved in mRNA degradation. Catalyzes the phosphorolysis of single-stranded polyribonucleotides processively in the 3'- to 5'-direction. In Parasynechococcus marenigrum (strain WH8102), this protein is Polyribonucleotide nucleotidyltransferase.